The sequence spans 429 residues: Mannose-6-phosphate isomerase (429 aa).

The Zn(2+) site is built by glutamine 110, histidine 112, glutamate 137, and histidine 282. Arginine 301 is an active-site residue.

Belongs to the mannose-6-phosphate isomerase type 1 family. Requires Zn(2+) as cofactor.

Its subcellular location is the cytoplasm. The catalysed reaction is D-mannose 6-phosphate = D-fructose 6-phosphate. The protein operates within nucleotide-sugar biosynthesis; GDP-alpha-D-mannose biosynthesis; alpha-D-mannose 1-phosphate from D-fructose 6-phosphate: step 1/2. Involved in the synthesis of the GDP-mannose and dolichol-phosphate-mannose required for a number of critical mannosyl transfer reactions. The protein is Mannose-6-phosphate isomerase (PMI1) of Candida glabrata (strain ATCC 2001 / BCRC 20586 / JCM 3761 / NBRC 0622 / NRRL Y-65 / CBS 138) (Yeast).